Here is an 89-residue protein sequence, read N- to C-terminus: Small ribosomal subunit protein uS15 (89 aa).

The protein belongs to the universal ribosomal protein uS15 family. In terms of assembly, part of the 30S ribosomal subunit. Forms a bridge to the 50S subunit in the 70S ribosome, contacting the 23S rRNA.

In terms of biological role, one of the primary rRNA binding proteins, it binds directly to 16S rRNA where it helps nucleate assembly of the platform of the 30S subunit by binding and bridging several RNA helices of the 16S rRNA. Its function is as follows. Forms an intersubunit bridge (bridge B4) with the 23S rRNA of the 50S subunit in the ribosome. This is Small ribosomal subunit protein uS15 from Leifsonia xyli subsp. xyli (strain CTCB07).